A 316-amino-acid polypeptide reads, in one-letter code: Ferrochelatase (316 aa).

Fe cation contacts are provided by H186 and E268.

It belongs to the ferrochelatase family.

It is found in the cytoplasm. The enzyme catalyses heme b + 2 H(+) = protoporphyrin IX + Fe(2+). Its pathway is porphyrin-containing compound metabolism; protoheme biosynthesis; protoheme from protoporphyrin-IX: step 1/1. In terms of biological role, catalyzes the ferrous insertion into protoporphyrin IX. This is Ferrochelatase from Deinococcus radiodurans (strain ATCC 13939 / DSM 20539 / JCM 16871 / CCUG 27074 / LMG 4051 / NBRC 15346 / NCIMB 9279 / VKM B-1422 / R1).